We begin with the raw amino-acid sequence, 1226 residues long: Polyamine-transporting ATPase 13A3 (1226 aa).

Topologically, residues 1–28 are cytoplasmic; sequence MDKEERKIINQGQEDEMEIYGYNLSRWK. An intramembrane segment occupies 29 to 49; the sequence is LAIVSLGVICTGGFLLLLLYW. Topologically, residues 50 to 205 are cytoplasmic; it reads MPEWRVKATC…IAVKVPSVFK (156 aa). Residue Ser-98 is modified to Phosphoserine. A helical membrane pass occupies residues 206–226; that stretch reads LLIKEVLNPFYIFQLFSVILW. Residues 227–232 are Lumenal-facing; it reads STDEYY. A helical membrane pass occupies residues 233–253; it reads YYALAIVVMSIVSIVSSLYSI. The Cytoplasmic portion of the chain corresponds to 254–409; sequence RKQYVMLHDM…KPTDFKLYRD (156 aa). A helical membrane pass occupies residues 410-430; the sequence is AYLFLLCLVAVAGIGFIYTII. Topologically, residues 431–448 are lumenal; the sequence is NSILNEVQVGVIIIESLD. Residues 449-469 traverse the membrane as a helical segment; it reads IITITVPPALPAAMTAGIVYA. Residues 470 to 940 are Cytoplasmic-facing; it reads QRRLKKIGIF…ALITSFCVFK (471 aa). Asp-498 functions as the 4-aspartylphosphate intermediate in the catalytic mechanism. Asp-498 and Thr-500 together coordinate Mg(2+). Residues 498-500, Phe-628, Arg-684, and Asp-750 contribute to the ATP site; that span reads DKT. A Phosphoserine modification is found at Ser-817. Asp-883 is a binding site for Mg(2+). Residue 883-887 coordinates ATP; sequence DGAND. The helical transmembrane segment at 941-961 threads the bilayer; it reads FMALYSIIQYFSVTLLYSILS. Position 962 (Asn-962) is a topological domain, lumenal. A helical transmembrane segment spans residues 963–983; the sequence is LGDFQFLFIDLAIILVVVFTM. At 984 to 999 the chain is on the cytoplasmic side; that stretch reads SLNPAWKELVAQRPPS. Residues 1000-1020 traverse the membrane as a helical segment; that stretch reads GLISGALLFSVLSQIIICIGF. Over 1021–1073 the chain is Lumenal; it reads QSLGFFWVKQQPWYEVWHPKSDACNATGSLLWNSSHLDNETELDEHNIQNYEN. A helical transmembrane segment spans residues 1074-1094; the sequence is TTVFFISSFQYLIVAIAFSKG. At 1095 to 1105 the chain is on the cytoplasmic side; it reads KPFRQPCYKNY. A helical membrane pass occupies residues 1106–1126; sequence FFVFSVIFLYVFILFIMLYPV. The Lumenal portion of the chain corresponds to 1127–1143; it reads ASVDQVLQIVCVPYQWR. Residues 1144 to 1164 form a helical membrane-spanning segment; it reads VTMLIIVLVNAFVSITVEESV. Residues 1165–1226 lie on the Cytoplasmic side of the membrane; sequence DRWRKCCLPW…NGSCQIITIT (62 aa).

It belongs to the cation transport ATPase (P-type) (TC 3.A.3) family. Type V subfamily.

It localises to the recycling endosome membrane. The protein resides in the early endosome membrane. It is found in the late endosome membrane. The enzyme catalyses putrescine(out) + ATP + H2O = putrescine(in) + ADP + phosphate + H(+). ATP-driven pump involved in endocytosis-dependent polyamine transport. Uses ATP as an energy source to transfer polyamine precursor putrescine from the endosomal compartment to the cytosol. The protein is Polyamine-transporting ATPase 13A3 (ATP13A3) of Macaca fascicularis (Crab-eating macaque).